The following is a 338-amino-acid chain: UDP-glucose 4-epimerase (338 aa).

NAD(+)-binding positions include 11-12, 31-36, 58-59, 80-84, Asn99, Ser124, Tyr149, Lys153, and Phe178; these read YI, DNLCNS, DI, and FAGLK. Substrate-binding residues include Ser124 and Tyr149. Tyr149 (proton acceptor) is an active-site residue. Residues Asn179, 199 to 200, 216 to 218, Arg231, and 292 to 295 each bind substrate; these read NL, SVF, and RSGD.

The protein belongs to the NAD(P)-dependent epimerase/dehydratase family. Homodimer. NAD(+) is required as a cofactor.

It carries out the reaction UDP-alpha-D-glucose = UDP-alpha-D-galactose. Its pathway is carbohydrate metabolism; galactose metabolism. Involved in the metabolism of galactose. Catalyzes the conversion of UDP-galactose (UDP-Gal) to UDP-glucose (UDP-Glc) through a mechanism involving the transient reduction of NAD. By controlling the internal galactose concentration, it may be linked to the biosynthesis of lipopolysaccharide surface molecules, which are important for the pathogenesis of H.influenzae. The chain is UDP-glucose 4-epimerase (galE) from Haemophilus influenzae (strain ATCC 51907 / DSM 11121 / KW20 / Rd).